A 284-amino-acid polypeptide reads, in one-letter code: Cell division protein FtsQ (284 aa).

Over 1–31 (MAQLPASMRRKRAAITSIHDKPPTRKQKLAN) the chain is Cytoplasmic. A helical membrane pass occupies residues 32-52 (AGGWVLLVIAFVVLAVGIYGL). Residues 53-284 (YKVITDATVA…SIAGGTKAKP (232 aa)) lie on the Periplasmic side of the membrane. The 70-residue stretch at 59–128 (ATVAKLEVVG…NGIRVRVMPR (70 aa)) folds into the POTRA domain.

Belongs to the FtsQ/DivIB family. FtsQ subfamily. In terms of assembly, part of a complex composed of FtsB, FtsL and FtsQ.

The protein resides in the cell inner membrane. Essential cell division protein. May link together the upstream cell division proteins, which are predominantly cytoplasmic, with the downstream cell division proteins, which are predominantly periplasmic. May control correct divisome assembly. In Acinetobacter oleivorans (strain JCM 16667 / KCTC 23045 / DR1), this protein is Cell division protein FtsQ.